A 571-amino-acid polypeptide reads, in one-letter code: uncharacterized protein (571 aa).

A run of 5 helical transmembrane segments spans residues 10-29 (VRLH…HFIG), 36-55 (VSLG…GLLF), 65-87 (WAFF…FASL), 96-118 (ALAV…LFRF), and 166-188 (ATTY…PRLL). In terms of domain architecture, RCK C-terminal spans 294–378 (TEVDDQELLS…IATAARNLGF (85 aa)). 6 consecutive transmembrane segments (helical) span residues 388-406 (LVYL…LLQV), 411-433 (VPLG…WLYS), 446-465 (LRLL…GLAA), 480-502 (LFAK…GLLL), 509-531 (LPPV…LNAL), and 546-568 (VPFA…CAVA).

The protein belongs to the AAE transporter (TC 2.A.81) family.

Its subcellular location is the cell membrane. This is an uncharacterized protein from Bordetella parapertussis (strain 12822 / ATCC BAA-587 / NCTC 13253).